The primary structure comprises 291 residues: Protease HtpX homolog (291 aa).

2 helical membrane passes run 11 to 31 (INTFLILFVFILACGGFGLLA) and 34 to 54 (FLGMSFFLFILLLAAGYACVQ). Position 140 (H140) interacts with Zn(2+). Residue E141 is part of the active site. Residue H144 participates in Zn(2+) binding. The next 2 membrane-spanning stretches (helical) occupy residues 155-175 (IVFGLVSAVGLISDMVLRALI) and 186-206 (AFSFVIVLFFSLLAPIAAMLV). E215 provides a ligand contact to Zn(2+).

The protein belongs to the peptidase M48B family. Zn(2+) is required as a cofactor.

It localises to the cell membrane. This is Protease HtpX homolog from Tropheryma whipplei (strain Twist) (Whipple's bacillus).